The chain runs to 65 residues: Large ribosomal subunit protein bL35 (65 aa).

A disordered region spans residues 1–28 (MPKMKTNRSAAKRFGKTGSGKFTRRRQN).

Belongs to the bacterial ribosomal protein bL35 family.

The protein is Large ribosomal subunit protein bL35 of Solidesulfovibrio magneticus (strain ATCC 700980 / DSM 13731 / RS-1) (Desulfovibrio magneticus).